We begin with the raw amino-acid sequence, 183 residues long: Glutathione-regulated potassium-efflux system ancillary protein KefG (183 aa).

This sequence belongs to the NAD(P)H dehydrogenase (quinone) family. KefG subfamily. In terms of assembly, interacts with KefB.

Its subcellular location is the cell inner membrane. It catalyses the reaction a quinone + NADH + H(+) = a quinol + NAD(+). The catalysed reaction is a quinone + NADPH + H(+) = a quinol + NADP(+). Functionally, regulatory subunit of a potassium efflux system that confers protection against electrophiles. Required for full activity of KefB. The chain is Glutathione-regulated potassium-efflux system ancillary protein KefG from Serratia proteamaculans (strain 568).